The sequence spans 413 residues: Aminopeptidase 2 (413 aa).

Residues Glu250, Glu316, Glu340, His345, His378, and Asp380 each coordinate a divalent metal cation.

It belongs to the peptidase M29 family. As to quaternary structure, homodimer. Requires Co(2+) as cofactor. Zn(2+) is required as a cofactor. The cofactor is Mg(2+).

Functionally, broad specificity metal-dependent exopeptidase, releasing all N-terminal amino acids. This chain is Aminopeptidase 2, found in Geobacillus stearothermophilus (Bacillus stearothermophilus).